We begin with the raw amino-acid sequence, 503 residues long: NAD(P)H-quinone oxidoreductase chain 4, chloroplastic (503 aa).

The next 14 helical transmembrane spans lie at 3–23 (FFPW…IVFF), 37–57 (LCIC…HFQV), 84–104 (GLSV…TLAA), 113–130 (LFHF…GLFA), 134–154 (LFLF…LLSM), 167–187 (FILY…GLTL), 208–228 (ALEI…SPIL), 242–262 (HYST…YGLI), 274–294 (SLFS…AALT), 305–325 (IAYS…SMTD), 330–350 (GALL…FLAG), 385–405 (SLAL…FGII), 416–436 (ILIS…SLSM), and 462–482 (LFLS…PDFV).

This sequence belongs to the complex I subunit 4 family.

It localises to the plastid. The protein localises to the chloroplast thylakoid membrane. It carries out the reaction a plastoquinone + NADH + (n+1) H(+)(in) = a plastoquinol + NAD(+) + n H(+)(out). It catalyses the reaction a plastoquinone + NADPH + (n+1) H(+)(in) = a plastoquinol + NADP(+) + n H(+)(out). The chain is NAD(P)H-quinone oxidoreductase chain 4, chloroplastic from Ipomoea purpurea (Common morning glory).